The following is a 689-amino-acid chain: Zinc finger protein 185 (689 aa).

Disordered stretches follow at residues 1-253 (MSIS…GRTK) and 298-534 (APDV…SCTS). Over residues 35–52 (LKGDKSWITKQDESEGRT) the composition is skewed to basic and acidic residues. The residue at position 66 (serine 66) is a Phosphoserine. Polar residues predominate over residues 95–114 (IDSSSQPQQQFPKANGTPKS). Phosphoserine is present on serine 153. Residues 157–166 (DTEEEEEEEV) show a composition bias toward acidic residues. Phosphoserine is present on proline 206. 2 stretches are compositionally biased toward basic and acidic residues: residues 217-232 (KRVE…EKSQ) and 310-331 (NKDK…EEAF). A compositionally biased stretch (polar residues) spans 338 to 349 (AARSSAQLSDGN). 2 stretches are compositionally biased toward low complexity: residues 373 to 382 (SSSATSVSAV) and 434 to 444 (DPAVPAQQPAD). Threonine 447 is subject to Phosphothreonine. Residues 448 to 458 (PERQSSPSGSE) show a composition bias toward polar residues. A phosphoserine mark is found at serine 453 and serine 465. Positions 504-524 (PTQQPADPSTPEQQNSPSGSE) are enriched in polar residues. The 63-residue stretch at 627-689 (GICTYCNREI…HCGKCYEKLF (63 aa)) folds into the LIM zinc-binding domain.

Expressed in placenta, pancreas and kidney. Also expressed in prostate, testis, ovary and blood.

Its subcellular location is the cytoplasm. It is found in the cytoskeleton. The protein localises to the cell junction. It localises to the focal adhesion. Its function is as follows. May be involved in the regulation of cellular proliferation and/or differentiation. This is Zinc finger protein 185 (ZNF185) from Homo sapiens (Human).